Here is a 282-residue protein sequence, read N- to C-terminus: DNA-binding transcriptional repressor YiaJ (282 aa).

Over residues methionine 1–proline 20 the composition is skewed to basic and acidic residues. Residues methionine 1–alanine 21 form a disordered region. The HTH iclR-type domain occupies serine 23–threonine 85. A DNA-binding region (H-T-H motif) is located at residues leucine 45 to glutamine 64. The region spanning isoleucine 100–phenylalanine 272 is the IclR-ED domain.

Functionally, negatively controls the transcription of the yiaKLMNOPQRS operon, which may be involved in the utilization of 2,3-diketo-L-gulonate. This chain is DNA-binding transcriptional repressor YiaJ (yiaJ), found in Escherichia coli (strain K12).